The following is a 322-amino-acid chain: Epoxide hydrolase A (322 aa).

The region spanning 27 to 131 (PVVILAHGFP…AVAALSVPAL (105 aa)) is the AB hydrolase-1 domain. Residue Asp103 is the Nucleophile of the active site. Catalysis depends on His298, which acts as the Proton acceptor.

Belongs to the AB hydrolase superfamily. Epoxide hydrolase family. Homodimer.

It catalyses the reaction an epoxide + H2O = an ethanediol. Its function is as follows. Could be involved in detoxification of extraneous host-cell epoxides. Catalyzes the hydrolysis of epoxide-containing substrates. In Mycobacterium tuberculosis (strain ATCC 25618 / H37Rv), this protein is Epoxide hydrolase A (ephA).